The primary structure comprises 389 residues: Acetyl-CoA:oxalate CoA-transferase (389 aa).

Residue His237 is part of the active site.

In terms of assembly, homodimer.

It carries out the reaction oxalate + acetyl-CoA = oxalyl-CoA + acetate. Its function is as follows. Involved in the catabolism of oxalate and in the adapatation to low pH. ACOCT serves to prime the oxalate-induced acid tolerance response (ATR) cycle by producing substrate for oxalyl-CoA decarboxylase (OXC) and formyl-coenzyme A transferase (FCOCT). Catalyzes the reversible conversion of acetyl-CoA and oxalate to oxalyl-CoA and acetate. It can also use formyl-CoA and oxalate to produce oxalyl-CoA and formate with significantly reduced specific activity. This is Acetyl-CoA:oxalate CoA-transferase (uctC) from Acetobacter aceti.